The sequence spans 408 residues: CinA-like protein (408 aa).

Belongs to the CinA family.

This chain is CinA-like protein, found in Anaeromyxobacter dehalogenans (strain 2CP-1 / ATCC BAA-258).